The primary structure comprises 146 residues: Coactosin (146 aa).

Residues 1-132 (MADVSSTELK…NEEELMTKVR (132 aa)) form the ADF-H domain.

Belongs to the actin-binding proteins ADF family. Coactosin subfamily. In terms of processing, the N-terminus is blocked.

Its subcellular location is the cytoplasm. It localises to the cytoskeleton. Binds to F-actin in a calcium independent manner. Binds to the filaments along their length. The chain is Coactosin (coaA) from Dictyostelium discoideum (Social amoeba).